A 445-amino-acid polypeptide reads, in one-letter code: Probable protein phosphatase 2C 14 (445 aa).

One can recognise a PPM-type phosphatase domain in the interval 120–440 (GFGVVSRNGK…DDITVVIIDL (321 aa)). Mn(2+)-binding residues include Asp-156, Gly-157, and Asp-318. A disordered region spans residues 384–404 (NSENESPSLNREIGSSPSKSP). Over residues 390-404 (PSLNREIGSSPSKSP) the composition is skewed to polar residues. Residue Asp-431 participates in Mn(2+) binding.

It belongs to the PP2C family. Mg(2+) is required as a cofactor. The cofactor is Mn(2+).

It catalyses the reaction O-phospho-L-seryl-[protein] + H2O = L-seryl-[protein] + phosphate. The enzyme catalyses O-phospho-L-threonyl-[protein] + H2O = L-threonyl-[protein] + phosphate. In Arabidopsis thaliana (Mouse-ear cress), this protein is Probable protein phosphatase 2C 14.